The following is a 268-amino-acid chain: Minor capsid protein VP2 (268 aa).

Positions 132–144 (STPQSLGALTGRT) are enriched in polar residues. Residues 132-199 (STPQSLGALT…SLSSAARTRS (68 aa)) are disordered. Positions 145–163 (NSRVSAPARSSPSALSNAP) are enriched in low complexity. Positions 164-178 (TATSLHSNQTVSTRL) are enriched in polar residues. The span at 179 to 195 (GSSAGSGTGVSSLSSAA) shows a compositional bias: low complexity.

Belongs to the norovirus VP2 family. In terms of assembly, homooligomer. The portal-like structure consists in 12 copies of VP2. Interacts with capsid protein VP1.

It localises to the virion. It is found in the host cytoplasm. Functionally, minor structural protein that forms a portal-like structure at a unique three-fold axis of symmetry, following binding to the host receptor. The channel formed by VP2 may allow the delivery of the viral genome through the host endosomal membrane. The protein is Minor capsid protein VP2 of Lordsdale virus (strain GII/Human/United Kingdom/Lordsdale/1993) (Human enteric calicivirus).